The chain runs to 816 residues: Leucine--tRNA ligase (816 aa).

Residues 40 to 51 carry the 'HIGH' region motif; sequence SYPSGSQLHAGH. The 'KMSKS' region motif lies at 576 to 580; it reads KMSKS. Lys-579 is a binding site for ATP.

It belongs to the class-I aminoacyl-tRNA synthetase family.

It is found in the cytoplasm. It catalyses the reaction tRNA(Leu) + L-leucine + ATP = L-leucyl-tRNA(Leu) + AMP + diphosphate. This is Leucine--tRNA ligase from Clostridium perfringens (strain 13 / Type A).